The chain runs to 874 residues: DNA mismatch repair protein MutS (874 aa).

630-637 (GPNMAGKS) is an ATP binding site.

This sequence belongs to the DNA mismatch repair MutS family.

This protein is involved in the repair of mismatches in DNA. It is possible that it carries out the mismatch recognition step. This protein has a weak ATPase activity. The sequence is that of DNA mismatch repair protein MutS from Chlorobium phaeovibrioides (strain DSM 265 / 1930) (Prosthecochloris vibrioformis (strain DSM 265)).